The primary structure comprises 962 residues: Glycine dehydrogenase (decarboxylating) (962 aa).

Position 709 is an N6-(pyridoxal phosphate)lysine (K709).

The protein belongs to the GcvP family. In terms of assembly, the glycine cleavage system is composed of four proteins: P, T, L and H. Pyridoxal 5'-phosphate is required as a cofactor.

The catalysed reaction is N(6)-[(R)-lipoyl]-L-lysyl-[glycine-cleavage complex H protein] + glycine + H(+) = N(6)-[(R)-S(8)-aminomethyldihydrolipoyl]-L-lysyl-[glycine-cleavage complex H protein] + CO2. The glycine cleavage system catalyzes the degradation of glycine. The P protein binds the alpha-amino group of glycine through its pyridoxal phosphate cofactor; CO(2) is released and the remaining methylamine moiety is then transferred to the lipoamide cofactor of the H protein. The sequence is that of Glycine dehydrogenase (decarboxylating) from Shewanella baltica (strain OS223).